The following is a 522-amino-acid chain: Sugar transport protein MST2 (522 aa).

Topologically, residues 1-24 are cytoplasmic; that stretch reads MAAATAADVAEDTASVYSGKLTLY. A helical membrane pass occupies residues 25 to 45; that stretch reads VFLTCGVAATGGLIIGYDIGI. Residues 46–82 are Extracellular-facing; it reads SGGVTSMDTFLGKFFPSVLHQEQTAQGTSQYCKFNSQ. The helical transmembrane segment at 83–103 threads the bilayer; it reads PLTAFTSSLYLAALVASFFVA. Topologically, residues 104–111 are cytoplasmic; the sequence is SFTRALGR. Residues 112 to 132 traverse the membrane as a helical segment; the sequence is KWSMFGGGVSFLAGATLNGAA. At 133–134 the chain is on the extracellular side; sequence RN. Residues 135–155 traverse the membrane as a helical segment; the sequence is VAMLIVGRILLGIGVAFCGLS. Residues 156-169 are Cytoplasmic-facing; the sequence is TPIYLSEMAPPRLR. A helical transmembrane segment spans residues 170 to 190; that stretch reads GMLNIGLQLMITVGIFSANLV. Over 191–204 the chain is Extracellular; the sequence is NYGAAKIRGGWGWR. A helical membrane pass occupies residues 205–225; it reads VSLGLAAAPACVIAVGSLFLP. Over 226–291 the chain is Cytoplasmic; sequence DSPSSLINRG…DVLQRRYRPQ (66 aa). A helical transmembrane segment spans residues 292 to 312; the sequence is LAMAVLIPFFQQLTGINVIMF. Residues 313 to 329 are Extracellular-facing; the sequence is YAPVLFKTIGLGGDASL. The chain crosses the membrane as a helical span at residues 330 to 350; that stretch reads MSAVITGLVNIVATFVSIATV. Residues 351 to 361 are Cytoplasmic-facing; the sequence is DSLGRRKLLFQ. Residues 362 to 382 form a helical membrane-spanning segment; sequence GGCQMLVSQVIIGTLIGVVFG. Residues 383–391 lie on the Extracellular side of the membrane; sequence TSGDGNISR. Residues 392–412 traverse the membrane as a helical segment; the sequence is ALAVCIVVFICVYVAGFAWSW. Topologically, residues 413–434 are cytoplasmic; that stretch reads GPLGVLLPSEIFPLEVRPAGQS. A helical transmembrane segment spans residues 435–455; that stretch reads ISVAVNMLCTFAVAEAFLPML. The Extracellular segment spans residues 456 to 459; the sequence is CHMR. A helical membrane pass occupies residues 460-480; that stretch reads FGLFYFFSGWVLVMTLFVSAF. At 481-522 the chain is on the cytoplasmic side; it reads LPETKGVPIEKMTVVWRTHWFWGRFYCNQDADAHVQVANSKV.

The protein belongs to the major facilitator superfamily. Sugar transporter (TC 2.A.1.1) family.

The protein resides in the membrane. In terms of biological role, mediates active uptake of hexoses by sugar:proton symport. Can transport glucose. In Oryza sativa subsp. japonica (Rice), this protein is Sugar transport protein MST2.